Here is a 1576-residue protein sequence, read N- to C-terminus: DNA-directed RNA polymerase subunit beta' (1576 aa).

Zn(2+)-binding residues include cysteine 64, cysteine 66, cysteine 79, and cysteine 82. Residues aspartate 590, aspartate 592, and aspartate 594 each contribute to the Mg(2+) site. 4 residues coordinate Zn(2+): cysteine 928, cysteine 1002, cysteine 1009, and cysteine 1012.

This sequence belongs to the RNA polymerase beta' chain family. The RNAP catalytic core consists of 2 alpha, 1 beta, 1 beta' and 1 omega subunit. When a sigma factor is associated with the core the holoenzyme is formed, which can initiate transcription. Requires Mg(2+) as cofactor. Zn(2+) serves as cofactor.

It catalyses the reaction RNA(n) + a ribonucleoside 5'-triphosphate = RNA(n+1) + diphosphate. Functionally, DNA-dependent RNA polymerase catalyzes the transcription of DNA into RNA using the four ribonucleoside triphosphates as substrates. This Aquifex pyrophilus protein is DNA-directed RNA polymerase subunit beta'.